Consider the following 519-residue polypeptide: Baeyer-Villiger monooxygenase (519 aa).

FAD-binding positions include glutamate 41, 49–52 (TWRD), aspartate 61, tyrosine 67, and valine 110. 59 to 61 (ACD) serves as a coordination point for NADP(+). NADP(+) contacts are provided by residues 183-189 (TGASAIQ), 206-207 (RT), and 292-293 (KR). Methionine 399 contacts FAD. Residues 499–519 (GAKAAEADTGADTGADAEVSA) are disordered.

Belongs to the FAD-binding monooxygenase family. The cofactor is FAD.

Catalyzes a Baeyer-Villiger oxidation reaction, i.e. the insertion of an oxygen atom into a carbon-carbon bond adjacent to a carbonyl, which converts ketones to esters or lactones using NADPH and/or NADH as an electron donor. Thus, can convert bicyclo[3.2.0]hept-2-en-6-one into the oxidative lactone products 2-oxabicyclo[3.3.0]oct-6-en-3-one and 3-oxabicyclo[3.3.0]oct-6-en-2-one. Is also able to catalyze the sulfoxidation of methyl phenyl sulfide (thioanisole). This Streptomyces coelicolor (strain ATCC BAA-471 / A3(2) / M145) protein is Baeyer-Villiger monooxygenase.